The following is a 177-amino-acid chain: Transcriptional repressor NrdR (177 aa).

Residues 3–34 (CLFCQHTDTRVIDSRVSEDGATIRRRRECEAC) fold into a zinc finger. The 91-residue stretch at 49-139 (PVIIKKDGGR…VYRSFQDVAD (91 aa)) folds into the ATP-cone domain.

It belongs to the NrdR family. Requires Zn(2+) as cofactor.

Functionally, negatively regulates transcription of bacterial ribonucleotide reductase nrd genes and operons by binding to NrdR-boxes. The polypeptide is Transcriptional repressor NrdR (Xylella fastidiosa (strain M23)).